The primary structure comprises 549 residues: MKNINPTHTQAWKSLEAHKAELSNTTIQDLFKQEKNRFDDYSLTFNNQILVDFSKNNINQTTLSHLRQLAQECALDSAKEAMFTGEKINRTENRAVLHTALRNRTNTPVLVDGKDVMPEVNAVLAKMKDFCQRIISGEWKGYTGKAITDVVNIGIGGSDLGPYMVTEALRPYKNHLNMHFVSNVDGTHIAETLKKVNPETTLFLVASKTFTTQETMTNAQSARDWLLKAAKDESAVAKHFAALSTNAKDVEKFGIDTNNMFEFWDWVGGRYSLWSAIGLSIALSIGFENFEALLNGAHEMDKHFRSAPIEQNIPTTLALVGLWNTNFLGAQTEAILPYDQYLHRFAAYFQQGNMESNGKYVDRDGNVINNYQTGPIIWGEPGTNGQHAFYQLIHQGTTLIPCDFIAPAQTHNPLADHHNKLLSNFFAQTEALAFGKTKEEVEAEFIKAGKSLDDVKNIVPFKVFTGNKPTNSILVQKITPFTLGALIAMYEHKIFVQGVIFNIFSFDQWGVELGKQLANRILPELTDSEKVASHDSSTNGLINQFKAWR.

Residue Glu-355 is the Proton donor of the active site. Residues His-387 and Lys-515 contribute to the active site.

Belongs to the GPI family.

Its subcellular location is the cytoplasm. It catalyses the reaction alpha-D-glucose 6-phosphate = beta-D-fructose 6-phosphate. The protein operates within carbohydrate biosynthesis; gluconeogenesis. Its pathway is carbohydrate degradation; glycolysis; D-glyceraldehyde 3-phosphate and glycerone phosphate from D-glucose: step 2/4. Functionally, catalyzes the reversible isomerization of glucose-6-phosphate to fructose-6-phosphate. This is Glucose-6-phosphate isomerase from Haemophilus influenzae (strain PittEE).